The sequence spans 838 residues: Probable glucan 1,3-beta-glucosidase D (838 aa).

Over residues 1-23 (MPSHSRSRDRYRGRDESEPERDR) the composition is skewed to basic and acidic residues. The disordered stretch occupies residues 1–298 (MPSHSRSRDR…GASDSDMDGA (298 aa)). Residues 1–310 (MPSHSRSRDR…GTPFWKKKKT (310 aa)) are Cytoplasmic-facing. The segment covering 35–45 (DYEDDELDDDD) has biased composition (acidic residues). 4 stretches are compositionally biased toward basic and acidic residues: residues 111 to 124 (DSPRRRDRHRDGDR), 149 to 164 (SRDDRRERAYESEREA), 200 to 221 (AKLRSEYDKEDRSRAKADAKAE), and 234 to 246 (QPRRLDPFPEETP). The helical; Signal-anchor for type II membrane protein transmembrane segment at 311–331 (WIAVGVVVVLLAIIIPVAVVV) threads the bilayer. Topologically, residues 332 to 838 (SKKNNEKKSD…PDFGDLPENY (507 aa)) are extracellular. Residues 335-359 (NNEKKSDSTTDDTTPRNSNLDGISR) are disordered. N-linked (GlcNAc...) asparagine glycans are attached at residues Asn-383, Asn-388, Asn-400, Asn-553, and Asn-565. The Proton donor role is filled by Glu-604. 2 N-linked (GlcNAc...) asparagine glycosylation sites follow: Asn-643 and Asn-696. Catalysis depends on Glu-709, which acts as the Nucleophile.

This sequence belongs to the glycosyl hydrolase 5 (cellulase A) family.

It localises to the cell membrane. The enzyme catalyses Successive hydrolysis of beta-D-glucose units from the non-reducing ends of (1-&gt;3)-beta-D-glucans, releasing alpha-glucose.. Functionally, glucosidase involved in the degradation of cellulosic biomass. Active on lichenan. This Aspergillus terreus (strain NIH 2624 / FGSC A1156) protein is Probable glucan 1,3-beta-glucosidase D (exgD).